The primary structure comprises 916 residues: Chitin synthase B (916 aa).

Disordered regions lie at residues 1 to 84 and 114 to 141; these read MAYQ…AGFH and SPYA…GGGL. Asparagine 18 carries an N-linked (GlcNAc...) asparagine glycan. A compositionally biased stretch (polar residues) spans 60-75; it reads RGTSPVRPTSGYSLTE. A glycan (N-linked (GlcNAc...) asparagine) is linked at asparagine 546. 7 helical membrane-spanning segments follow: residues 572–594, 628–648, 663–683, 715–735, 743–763, 845–865, and 884–904; these read MFFL…FSLA, IINT…FILA, SFVV…YLVV, IIII…FMYL, SFPA…VYAF, LVTL…SDGM, and ALLW…CWFL.

Belongs to the chitin synthase family. Class III subfamily.

The protein resides in the cell membrane. It catalyses the reaction [(1-&gt;4)-N-acetyl-beta-D-glucosaminyl](n) + UDP-N-acetyl-alpha-D-glucosamine = [(1-&gt;4)-N-acetyl-beta-D-glucosaminyl](n+1) + UDP + H(+). Polymerizes chitin, a structural polymer of the cell wall and septum, by transferring the sugar moiety of UDP-GlcNAc to the non-reducing end of the growing chitin polymer. Involved in hyphal growth and more particularly in branching. The chain is Chitin synthase B from Aspergillus oryzae (strain ATCC 42149 / RIB 40) (Yellow koji mold).